Here is a 945-residue protein sequence, read N- to C-terminus: Xylanolytic transcriptional activator xlnR (945 aa).

Residues 1–23 (MSTPSIPQFTSSFSPFSSGSHST) are compositionally biased toward low complexity. Disordered stretches follow at residues 1-32 (MSTPSIPQFTSSFSPFSSGSHSTGMAPSQTVG) and 53-118 (AAGT…APVR). A compositionally biased stretch (basic and acidic residues) spans 73 to 84 (HTKDQPPFDNEK). The segment at residues 125 to 151 (CDQCNQLRTKCDGQHPCAHCIEFGLTC) is a DNA-binding region (zn(2)-C6 fungal-type). 2 disordered regions span residues 172 to 210 (AAAATQGSNGHSGQANASLMGERTSEDSRPGQDVNGTYD) and 559 to 601 (PPNV…INVT). A compositionally biased stretch (polar residues) spans 176–188 (TQGSNGHSGQANA). Over residues 565 to 581 (ARQDGERDGDGEADKRH) the composition is skewed to basic and acidic residues.

Belongs to the xlnR/xlr1 family.

Its subcellular location is the nucleus. Functionally, transcriptional activator of the xylanolytic system. Involved in the regulation of extracellular cellulolytic and xylanolytic genes and in the regulation of the intracellular activities of D-xylose catabolic genes in the pentose catabolic pathway (PCP) in response to the presence of D-xylose. Binds to the DNA sequence 5'-GGNTAAA-3'. The protein is Xylanolytic transcriptional activator xlnR (xlnR) of Aspergillus niger.